Consider the following 299-residue polypeptide: MKPDAHQVKQFLLNLQDTICQQLTAVDGAEFVEDSWQREAGGGGRSRVLRNGGVFEQAGVNFSHVHGEAMPASATAHRPELAGRSFEAMGVSLVVHPHNPYVPTSHANVRFFIAEKPGAEPVWWFGGGFDLTPFYGFEEDAIHWHRTARDLCLPFGEDVYPRYKKWCDDYFYLKHRNEQRGIGGLFFDDLNTPDFDHCFAFMQAVGKGYTDAYLPIVERRKAMAYGERERNFQLYRRGRYVEFNLVWDRGTLFGLQTGGRTESILMSMPPLVRWEYDYQPKDGSPEAALSEFIKVRDWV.

Residue Ser92 participates in substrate binding. Positions 96 and 106 each coordinate Mn(2+). The Proton donor role is filled by His106. 108-110 lines the substrate pocket; it reads NVR. Mn(2+) contacts are provided by His145 and His175. The interval 240 to 275 is important for dimerization; that stretch reads YVEFNLVWDRGTLFGLQTGGRTESILMSMPPLVRWE. A substrate-binding site is contributed by 258–260; sequence GGR.

Belongs to the aerobic coproporphyrinogen-III oxidase family. In terms of assembly, homodimer. It depends on Mn(2+) as a cofactor.

The protein resides in the cytoplasm. It catalyses the reaction coproporphyrinogen III + O2 + 2 H(+) = protoporphyrinogen IX + 2 CO2 + 2 H2O. The protein operates within porphyrin-containing compound metabolism; protoporphyrin-IX biosynthesis; protoporphyrinogen-IX from coproporphyrinogen-III (O2 route): step 1/1. Functionally, involved in the heme biosynthesis. Catalyzes the aerobic oxidative decarboxylation of propionate groups of rings A and B of coproporphyrinogen-III to yield the vinyl groups in protoporphyrinogen-IX. The protein is Oxygen-dependent coproporphyrinogen-III oxidase of Escherichia coli O8 (strain IAI1).